We begin with the raw amino-acid sequence, 252 residues long: 2-succinyl-6-hydroxy-2,4-cyclohexadiene-1-carboxylate synthase (252 aa).

This sequence belongs to the AB hydrolase superfamily. MenH family. Monomer.

The enzyme catalyses 5-enolpyruvoyl-6-hydroxy-2-succinyl-cyclohex-3-ene-1-carboxylate = (1R,6R)-6-hydroxy-2-succinyl-cyclohexa-2,4-diene-1-carboxylate + pyruvate. It participates in quinol/quinone metabolism; 1,4-dihydroxy-2-naphthoate biosynthesis; 1,4-dihydroxy-2-naphthoate from chorismate: step 3/7. Its pathway is quinol/quinone metabolism; menaquinone biosynthesis. Its function is as follows. Catalyzes a proton abstraction reaction that results in 2,5-elimination of pyruvate from 2-succinyl-5-enolpyruvyl-6-hydroxy-3-cyclohexene-1-carboxylate (SEPHCHC) and the formation of 2-succinyl-6-hydroxy-2,4-cyclohexadiene-1-carboxylate (SHCHC). The protein is 2-succinyl-6-hydroxy-2,4-cyclohexadiene-1-carboxylate synthase of Salmonella paratyphi B (strain ATCC BAA-1250 / SPB7).